The sequence spans 274 residues: MTLACCKLDPHPQSPARQHTGPWLVWLHGLLGSGQDWLPVAELCGDYPSLLIDLPGHGNSVALTTTGFEDISRQISETLQANGIREYWLAGYSLGGRIAMYHACYGHKVGLQGLLVEGGNLGLESDELRKARFEQDCQWAQRFRHEPLPQVLADWYQQDVFADLDSQQREQLVAVRANNHGPAVADMLEATSLGHQPWLLPALQCLSVPYTYLCGERDHKFQQVAHQYKLPLRTLARAGHNAHRANPGAFAALVLSFLSQSSFLPLSSFLPPSR.

It belongs to the AB hydrolase superfamily. MenH family. In terms of assembly, monomer.

It catalyses the reaction 5-enolpyruvoyl-6-hydroxy-2-succinyl-cyclohex-3-ene-1-carboxylate = (1R,6R)-6-hydroxy-2-succinyl-cyclohexa-2,4-diene-1-carboxylate + pyruvate. It participates in quinol/quinone metabolism; 1,4-dihydroxy-2-naphthoate biosynthesis; 1,4-dihydroxy-2-naphthoate from chorismate: step 3/7. It functions in the pathway quinol/quinone metabolism; menaquinone biosynthesis. Catalyzes a proton abstraction reaction that results in 2,5-elimination of pyruvate from 2-succinyl-5-enolpyruvyl-6-hydroxy-3-cyclohexene-1-carboxylate (SEPHCHC) and the formation of 2-succinyl-6-hydroxy-2,4-cyclohexadiene-1-carboxylate (SHCHC). The chain is 2-succinyl-6-hydroxy-2,4-cyclohexadiene-1-carboxylate synthase from Yersinia enterocolitica serotype O:8 / biotype 1B (strain NCTC 13174 / 8081).